A 387-amino-acid polypeptide reads, in one-letter code: 8-amino-7-oxononanoate synthase (387 aa).

G109–Y110 provides a ligand contact to pyridoxal 5'-phosphate. Position 134 (H134) interacts with substrate. Pyridoxal 5'-phosphate contacts are provided by S182, H214, and T242. K245 carries the post-translational modification N6-(pyridoxal phosphate)lysine. Substrate is bound at residue T359.

The protein belongs to the class-II pyridoxal-phosphate-dependent aminotransferase family. BioF subfamily. In terms of assembly, homodimer. Pyridoxal 5'-phosphate is required as a cofactor.

The enzyme catalyses 6-carboxyhexanoyl-[ACP] + L-alanine + H(+) = (8S)-8-amino-7-oxononanoate + holo-[ACP] + CO2. Its pathway is cofactor biosynthesis; biotin biosynthesis. Its function is as follows. Catalyzes the decarboxylative condensation of pimeloyl-[acyl-carrier protein] and L-alanine to produce 8-amino-7-oxononanoate (AON), [acyl-carrier protein], and carbon dioxide. The sequence is that of 8-amino-7-oxononanoate synthase from Haemophilus ducreyi (strain 35000HP / ATCC 700724).